The sequence spans 669 residues: Myb-like protein M (669 aa).

The tract at residues 27 to 69 (DPSLMDDEFSDNEYDLSPKDDVPSPSKRGRGQIQNGIRRSPNK) is disordered. The span at 30–40 (LMDDEFSDNEY) shows a compositional bias: acidic residues. HTH myb-type domains lie at 60–118 (QNGI…SPDI) and 119–170 (RKGP…SREV). 2 DNA-binding regions (H-T-H motif) span residues 90–114 (WKRI…KRVL) and 142–166 (WKKI…KSLQ). The Myb-like domain maps to 172–223 (WVPKEDEVLVKKVDEMGENLSWLEVSEYLAKLKHTNTLRTALECKTRYLQLT). Disordered regions lie at residues 226-530 (GGSI…EDNG) and 550-636 (IKNK…PHQS). 3 stretches are compositionally biased toward low complexity: residues 234–382 (NQSN…SSPS), 389–415 (NNNN…NSNN), and 450–464 (PTSL…SSPS). Residues 465–482 (CNNSIRQPSPSPSIKTFK) show a composition bias toward polar residues. Composition is skewed to low complexity over residues 483 to 521 (STIV…NNDN), 555 to 593 (NNNN…NSDN), and 611 to 636 (SNFK…PHQS).

It is found in the nucleus. The chain is Myb-like protein M (mybM) from Dictyostelium discoideum (Social amoeba).